The chain runs to 305 residues: Large ribosomal subunit protein uL3c (305 aa).

A chloroplast-targeting transit peptide spans 1–84; that stretch reads MAAILPTFSI…AVGGLEIKMM (84 aa). Residues 228 to 256 form a disordered region; that stretch reads SHRALGSIGAGTTPGHVYKGKKMPGRMGG.

As to quaternary structure, component of the chloroplast large ribosomal subunit (LSU). Mature 70S chloroplast ribosomes of higher plants consist of a small (30S) and a large (50S) subunit. The 30S small subunit contains 1 molecule of ribosomal RNA (16S rRNA) and 24 different proteins. The 50S large subunit contains 3 rRNA molecules (23S, 5S and 4.5S rRNA) and 33 different proteins.

The protein localises to the plastid. It is found in the chloroplast. Functionally, component of the chloroplast ribosome (chloro-ribosome), a dedicated translation machinery responsible for the synthesis of chloroplast genome-encoded proteins, including proteins of the transcription and translation machinery and components of the photosynthetic apparatus. The chain is Large ribosomal subunit protein uL3c (RPL3) from Spinacia oleracea (Spinach).